A 412-amino-acid chain; its full sequence is Burnettramic acids biosynthesis cluster protein E (412 aa).

3 disordered regions span residues 1-66 (MAIA…KKIR), 308-342 (RNPT…SLAT), and 386-412 (SRAE…AAKG). Residues 36 to 58 (EDEQWALDELQDELCQEEPSDSE) are compositionally biased toward acidic residues. Residues 395 to 404 (EATTEPSVQS) are compositionally biased toward polar residues.

Its pathway is mycotoxin biosynthesis. In terms of biological role, part of the gene cluster that mediates the biosynthesis of burnettramic acids, an unusual class of bolaamphiphilic pyrrolizidinediones that display potent antibacterial, antifungal, and cytotoxic activities. The first step of the biosynthesis of burnettramic acids is the hydroxylation of proline by the proline hydroxylase buaE to generate 4-hydroxyproline. The PKS-NRPS buaA and trans-enoyl reductase buaC construct the highly reduced polyketide chain, and the condensation (C) domain of buaA then catalyzes the amide bond formation with the activated 4-hydroxyproline. This is followed by the R domain releasing the nascent polyketide-peptide directly via a Dieckmann condensation to afford a tetramic acid fused to the hydroxyproline, generating the bicyclic pyrrolidinedione moiety. The cytochrome P450 monooxygenases buaD and buaG are likely responsible for the multiple hydroxylations on the polyketide chain and its terminus, although in the heterologous context, buaD does not appear to be required. Therefore, while buaG may be a multifunctional cytochrome P450 monooxygenase, it cannot be ruled out that the two secondary alcohols on the polyketide chain could have an acetate origin. Finally, the glycosyltransferase buaB transfers beta-D-mannose to the aglycone burnettramic acid A to form burnettramic acid A. Burnettramic acid B is a minor cis-pyrrolizidine epimer of burnettramic acid A and it is likely that small amounts of it form naturally in acidic environments. The role of the uncharacterized protein buaF in the biosynthesis of burnettramic acids has still to be determined. The protein is Burnettramic acids biosynthesis cluster protein E of Petromyces alliaceus (Aspergillus alliaceus).